The sequence spans 403 residues: Lissencephaly-1 homolog 1 (403 aa).

Residues 7 to 38 (QRDELNQAIHQYLLISYQQSAQLFKTEAAVKD) enclose the LisH domain. A coiled-coil region spans residues 51-87 (NSIVRLSKRVITLEQQVEQLNEQLAQAQAGKIQFNKS). WD repeat units lie at residues 103–142 (GHRA…FEKT), 145–184 (GHTS…CVKT), 187–226 (GHEH…CKKT), 229–270 (EHQE…HQLS), 271–327 (GHEH…NLFT), 330–369 (GHDN…QKKK), and 373–403 (AHDK…WLLS).

It belongs to the WD repeat LIS1/nudF family.

The protein localises to the cytoplasm. It is found in the cytoskeleton. Its subcellular location is the microtubule organizing center. It localises to the centrosome. In terms of biological role, positively regulates the activity of the minus-end directed microtubule motor protein dynein. May enhance dynein-mediated microtubule sliding by targeting dynein to the microtubule plus end. Required for several dynein- and microtubule-dependent processes. This is Lissencephaly-1 homolog 1 from Paramecium tetraurelia.